We begin with the raw amino-acid sequence, 252 residues long: Protein BTG3 (252 aa).

A disordered region spans residues 138 to 163 (VTSDYHSGSSSSDEDTSKEVDVKPSS).

The protein belongs to the BTG family. As to expression, ubiquitous.

In terms of biological role, overexpression impairs serum-induced cell cycle progression from the G0/G1 to S phase. This is Protein BTG3 (Btg3) from Mus musculus (Mouse).